The primary structure comprises 284 residues: MRAARLMGALLALAGLLQLALSLRIAAFNIRTFGETKMSNATLSNYIVRILSRYDIALIQEVRDSHLTAVGKLLNELNQDDPNNYHHVVSEPLGRSTYKERYLFVFRPDQVSVLDSYLYDDGCEPCGNDTFNREPSVVKFSSPSTQVKEFAIVPLHAAPSDAAAEIDSLYDVYLNVRQKWDLEDIMLMGDFNAGCSYVTTSHWSSIRLRESPPFQWLIPDTADTTVSSTHCAYDRIVVAGPLLQRAVVPDSAAPFDFQAAFGLSEQTALAISDHYPVEVTLKRA.

An N-terminal signal peptide occupies residues 1–22 (MRAARLMGALLALAGLLQLALS). Asn40 is a glycosylation site (N-linked (GlcNAc...) asparagine). The active site involves Glu100. Residues Cys123 and Cys126 are joined by a disulfide bond. A glycan (N-linked (GlcNAc...) asparagine) is linked at Asn128. Residue His156 is part of the active site. Cys195 and Cys231 are disulfide-bonded.

It belongs to the DNase I family. Requires Ca(2+) as cofactor. Mg(2+) is required as a cofactor.

The protein localises to the secreted. The protein resides in the zymogen granule. It localises to the nucleus envelope. The catalysed reaction is Endonucleolytic cleavage to 5'-phosphodinucleotide and 5'-phosphooligonucleotide end-products.. In terms of biological role, serum endocuclease secreted into body fluids by a wide variety of exocrine and endocrine organs. Expressed by non-hematopoietic tissues and preferentially cleaves protein-free DNA. Among other functions, seems to be involved in cell death by apoptosis. Binds specifically to G-actin and blocks actin polymerization. Together with DNASE1L3, plays a key role in degrading neutrophil extracellular traps (NETs). NETs are mainly composed of DNA fibers and are released by neutrophils to bind pathogens during inflammation. Degradation of intravascular NETs by DNASE1 and DNASE1L3 is required to prevent formation of clots that obstruct blood vessels and cause organ damage following inflammation. This is Deoxyribonuclease-1 (DNASE1) from Sus scrofa (Pig).